A 246-amino-acid chain; its full sequence is Allergin-1 (246 aa).

Residues 1-33 (MGDGDSPMCLSAVSFKGIRCWLDKLLLWALTIS) form the signal peptide. At 34-150 (ITLQNAAVDC…DESCPSCRLS (117 aa)) the chain is on the extracellular side. The 80-residue stretch at 52 to 131 (PSPNLNSSMN…VNVSNLMKYS (80 aa)) folds into the Ig-like C2-type domain. The N-linked (GlcNAc...) asparagine glycan is linked to Asn68. Cys73 and Cys120 form a disulfide bridge. Residues 151–171 (LLLPGLLLGILVIVLVLAYLI) traverse the membrane as a helical segment. The Cytoplasmic segment spans residues 172–246 (HLKYKKGKKT…ADYIYSELTH (75 aa)). 2 consecutive short sequence motifs (ITIM motif) follow at residues 214-219 (IHYATP) and 239-244 (YIYSEL). Phosphotyrosine occurs at positions 216 and 241.

Monomer. Interacts (tyrosine-phosphorylated) with PTPN6, PTPN11 and INPP5D. N-glycosylated. In terms of tissue distribution, expressed in myeloid cells (dendritic cells, macrophages and neutrophils but not in T-cells, B-cells or natural killer cells) and mast cells (at protein level).

The protein localises to the cell membrane. Its subcellular location is the secreted. Its function is as follows. Immunoglobulin-like receptor which plays an inhibitory role in degranulation of mast cells. Negatively regulates IgE-mediated mast cell activation and suppresses the type I immediate hypersensitivity reaction. This is Allergin-1 (Milr1) from Mus musculus (Mouse).